A 439-amino-acid polypeptide reads, in one-letter code: Maintenance of mitochondrial morphology protein 1 (439 aa).

Residues 1–76 are Lumenal-facing; it reads MSQDLIETTA…NGNTWSFTQG (76 aa). The helical transmembrane segment at 77-97 threads the bilayer; the sequence is LVIGQVSVIFIIIVFVKFFVF. Residues 98-439 lie on the Cytoplasmic side of the membrane; the sequence is ADSSSHIPTK…TPGEYVNSNI (342 aa). Disordered stretches follow at residues 125–145, 309–336, and 405–425; these read KHSN…SLDS, MNGY…DGGT, and REPV…GTSA. The SMP-LTD domain maps to 165–395; that stretch reads ASESLDWFNV…EPRFQVVRLP (231 aa). 2 stretches are compositionally biased toward low complexity: residues 315–326 and 410–424; these read ENANGDGASSSN and KKTT…NGTS.

The protein belongs to the MMM1 family. In terms of assembly, homodimer. Component of the ER-mitochondria encounter structure (ERMES) or MDM complex, composed of MMM1, MDM10, MDM12 and MDM34. An MMM1 homodimer associates with one molecule of MDM12 on each side in a pairwise head-to-tail manner, and the SMP-LTD domains of MMM1 and MDM12 generate a continuous hydrophobic tunnel for phospholipid trafficking.

Its subcellular location is the endoplasmic reticulum membrane. Component of the ERMES/MDM complex, which serves as a molecular tether to connect the endoplasmic reticulum (ER) and mitochondria. Components of this complex are involved in the control of mitochondrial shape and protein biogenesis, and function in nonvesicular lipid trafficking between the ER and mitochondria. The MDM12-MMM1 subcomplex functions in the major beta-barrel assembly pathway that is responsible for biogenesis of all outer membrane beta-barrel proteins, and acts in a late step after the SAM complex. The MDM10-MDM12-MMM1 subcomplex further acts in the TOM40-specific pathway after the action of the MDM12-MMM1 complex. Essential for establishing and maintaining the structure of mitochondria and maintenance of mtDNA nucleoids. The polypeptide is Maintenance of mitochondrial morphology protein 1 (Candida albicans (strain WO-1) (Yeast)).